A 61-amino-acid polypeptide reads, in one-letter code: Putative antitoxin RelB2 (61 aa).

In terms of biological role, antitoxin component of a type II toxin-antitoxin (TA) system. Its cognate toxin is RelE2 (Potential). The sequence is that of Putative antitoxin RelB2 (relB2) from Methanocaldococcus jannaschii (strain ATCC 43067 / DSM 2661 / JAL-1 / JCM 10045 / NBRC 100440) (Methanococcus jannaschii).